A 46-amino-acid polypeptide reads, in one-letter code: Photosystem II reaction center protein K (46 aa).

The propeptide occupies 1-9 (MESILMIFA). The helical transmembrane segment at 25 to 45 (LPVIPVLFLLLAFVWQAAVSF) threads the bilayer.

This sequence belongs to the PsbK family. As to quaternary structure, PSII is composed of 1 copy each of membrane proteins PsbA, PsbB, PsbC, PsbD, PsbE, PsbF, PsbH, PsbI, PsbJ, PsbK, PsbL, PsbM, PsbT, PsbX, PsbY, PsbZ, Psb30/Ycf12, at least 3 peripheral proteins of the oxygen-evolving complex and a large number of cofactors. It forms dimeric complexes.

It localises to the plastid. The protein localises to the chloroplast thylakoid membrane. One of the components of the core complex of photosystem II (PSII). PSII is a light-driven water:plastoquinone oxidoreductase that uses light energy to abstract electrons from H(2)O, generating O(2) and a proton gradient subsequently used for ATP formation. It consists of a core antenna complex that captures photons, and an electron transfer chain that converts photonic excitation into a charge separation. This Stigeoclonium helveticum (Green alga) protein is Photosystem II reaction center protein K.